Reading from the N-terminus, the 230-residue chain is uncharacterized protein (230 aa).

Helical transmembrane passes span 34 to 54 (FFAG…MNFQ), 56 to 76 (VVQY…GLMF), 87 to 107 (MLFA…GMVI), 111 to 131 (GLGA…LMSV), 146 to 166 (MLFI…FLGS), 167 to 187 (PMFQ…YIAY), and 205 to 225 (VSLY…IGIF).

Belongs to the BI1 family.

Its subcellular location is the cell membrane. This is an uncharacterized protein from Helicobacter pylori (strain ATCC 700392 / 26695) (Campylobacter pylori).